The chain runs to 406 residues: Acetyltransferase sirH (406 aa).

Helical transmembrane passes span 9–29 (IFIEAQLPLIYANIILAFALG), 32–52 (AHTFRVCLTLPILLFLVCQSL), 63–83 (LLSNNSLVMFTVFVYIDWILL), 295–315 (VQLFVGFGVSAGLHAGVALLC), 323–343 (SALFFFGIQAPIIMLEDHVIA), and 358–378 (FIGFVWTTLAIGFTCRAWVGS).

It belongs to the wax synthase family.

It localises to the membrane. The protein operates within mycotoxin biosynthesis. Its function is as follows. Acetyltransferase; part of the gene cluster that mediates the biosynthesis of sirodesmin PL, an epipolythiodioxopiperazine (ETP) characterized by a disulfide bridged cyclic dipeptide and that acts as a phytotoxin which is involved in the blackleg didease of canola. SirD catalyzes the O-prenylation of L-tyrosine (L-Tyr) in the presence of dimethylallyl diphosphate (DMAPP) to yield 4-O-dimethylallyl-L-Tyr, and therefore represents probably the first pathway-specific enzyme in the biosynthesis of sirodesmin PL. 4-O-dimethylallyl-L-Tyr, then undergoes condensation with L-Ser in a reaction catalyzed by the non-ribosomal peptide synthase sirP to form the diketopiperazine (DKP) backbone. Further bishydroxylation of the DKP performed by the cytochrome P450 monooxygenase sirC leads to the production of the intermediate phomamide. This step is essential to form the reactive thiol group required for toxicity of sirodesmin PL. The next steps of sirodesmin biosynthesis are not well understood yet, but some predictions could be made from intermediate compounds identification. Phomamide is converted into phomalizarine via oxidation, probably by sirT. Further oxidation, methylation (by sirM or sirN) and reduction steps convert phomalizarine to deacetyl sirodesmin. Finally, acetyltransferase sirH probably acetylates deacetyl sirodesmin to produce sirodesmin PL. The chain is Acetyltransferase sirH from Leptosphaeria maculans (Blackleg fungus).